The chain runs to 421 residues: ATP-dependent RNA helicase RhlB (421 aa).

Positions 9-37 match the Q motif motif; sequence QKFSDFALHPAVIEALEKKGFHNCTPIQA. The region spanning 40–219 is the Helicase ATP-binding domain; the sequence is LPLTLEGRDV…FEQMNNAEYV (180 aa). 53 to 60 is an ATP binding site; sequence AQTGTGKT. Positions 165 to 168 match the DEAD box motif; the sequence is DEAD. The 146-residue stretch at 245–390 folds into the Helicase C-terminal domain; sequence RLLQTLLEEE…VSKYNPDALM (146 aa). The segment at 396–421 is disordered; sequence PLRLTRARPGNGPRRNGPPRNRRRSG. Positions 403-414 are enriched in low complexity; it reads RPGNGPRRNGPP.

It belongs to the DEAD box helicase family. RhlB subfamily. In terms of assembly, component of the RNA degradosome, which is a multiprotein complex involved in RNA processing and mRNA degradation.

The protein localises to the cytoplasm. It carries out the reaction ATP + H2O = ADP + phosphate + H(+). Functionally, DEAD-box RNA helicase involved in RNA degradation. Has RNA-dependent ATPase activity and unwinds double-stranded RNA. In Klebsiella pneumoniae (strain 342), this protein is ATP-dependent RNA helicase RhlB.